A 255-amino-acid chain; its full sequence is 5'-nucleotidase SurE (255 aa).

Positions 8, 9, 39, and 91 each coordinate a divalent metal cation.

It belongs to the SurE nucleotidase family. The cofactor is a divalent metal cation.

The protein localises to the cytoplasm. The catalysed reaction is a ribonucleoside 5'-phosphate + H2O = a ribonucleoside + phosphate. Its function is as follows. Nucleotidase that shows phosphatase activity on nucleoside 5'-monophosphates. This chain is 5'-nucleotidase SurE, found in Acinetobacter baumannii (strain AB0057).